Consider the following 346-residue polypeptide: Phenylalanine--tRNA ligase alpha subunit (346 aa).

Glu260 lines the Mg(2+) pocket.

Belongs to the class-II aminoacyl-tRNA synthetase family. Phe-tRNA synthetase alpha subunit type 1 subfamily. Tetramer of two alpha and two beta subunits. It depends on Mg(2+) as a cofactor.

The protein localises to the cytoplasm. It catalyses the reaction tRNA(Phe) + L-phenylalanine + ATP = L-phenylalanyl-tRNA(Phe) + AMP + diphosphate + H(+). The protein is Phenylalanine--tRNA ligase alpha subunit of Herpetosiphon aurantiacus (strain ATCC 23779 / DSM 785 / 114-95).